A 202-amino-acid polypeptide reads, in one-letter code: Imidazoleglycerol-phosphate dehydratase (202 aa).

The protein belongs to the imidazoleglycerol-phosphate dehydratase family.

It is found in the cytoplasm. The enzyme catalyses D-erythro-1-(imidazol-4-yl)glycerol 3-phosphate = 3-(imidazol-4-yl)-2-oxopropyl phosphate + H2O. It participates in amino-acid biosynthesis; L-histidine biosynthesis; L-histidine from 5-phospho-alpha-D-ribose 1-diphosphate: step 6/9. The protein is Imidazoleglycerol-phosphate dehydratase of Acinetobacter baumannii (strain SDF).